The chain runs to 475 residues: MQILFVASEVGPWSKTGGLGDVAGALPQALAERGNEVAVVTPRHGSIDPRAAGLQPVRTALQVRGEPVSLWVKRGPAPVYFVEHPHLFGNRRGLYGEGGRDHGDNAERFAFLTRAALALPGALGLRPRILHLNDWQCGLGPWLLRHEHARDPALAGARTVFTIHNLAYQGLFPKQVLPALGLPWEVFRWEAMEFFDQLSFMKAGLAFADALTTVSPTYAREILTPEGGASLDALLRHRARDLHGILNGIDVHAWDPARDPHLPAHFTAGDLAGKAACKAALQREVGLPVRPEVPVAGLVTRLAEQKGIDLVAAALPALLARDVQVVLLGSGDPAYQETFARAAREHPDRVAARIGFDEGLAHRIEAGADLFLMPSRFEPCGLNQMYSLRYGTVPVVRAVGGLADTVEDFDGVARGTGFRFSEYTPQALLTATRRALDVFRDRRAWRGLVERGMAEDNSWERSAARYEALYRTLAP.

Lys15 provides a ligand contact to ADP-alpha-D-glucose.

The protein belongs to the glycosyltransferase 1 family. Bacterial/plant glycogen synthase subfamily.

It carries out the reaction [(1-&gt;4)-alpha-D-glucosyl](n) + ADP-alpha-D-glucose = [(1-&gt;4)-alpha-D-glucosyl](n+1) + ADP + H(+). Its pathway is glycan biosynthesis; glycogen biosynthesis. Functionally, synthesizes alpha-1,4-glucan chains using ADP-glucose. In Anaeromyxobacter sp. (strain K), this protein is Glycogen synthase.